Here is a 398-residue protein sequence, read N- to C-terminus: 4-hydroxy-3-methylbut-2-en-1-yl diphosphate synthase (ferredoxin) (398 aa).

The [4Fe-4S] cluster site is built by Cys306, Cys309, Cys340, and Glu347.

This sequence belongs to the IspG family. The cofactor is [4Fe-4S] cluster.

The enzyme catalyses (2E)-4-hydroxy-3-methylbut-2-enyl diphosphate + 2 oxidized [2Fe-2S]-[ferredoxin] + H2O = 2-C-methyl-D-erythritol 2,4-cyclic diphosphate + 2 reduced [2Fe-2S]-[ferredoxin] + H(+). It functions in the pathway isoprenoid biosynthesis; isopentenyl diphosphate biosynthesis via DXP pathway; isopentenyl diphosphate from 1-deoxy-D-xylulose 5-phosphate: step 5/6. In terms of biological role, converts 2C-methyl-D-erythritol 2,4-cyclodiphosphate (ME-2,4cPP) into 1-hydroxy-2-methyl-2-(E)-butenyl 4-diphosphate. This Parasynechococcus marenigrum (strain WH8102) protein is 4-hydroxy-3-methylbut-2-en-1-yl diphosphate synthase (ferredoxin).